We begin with the raw amino-acid sequence, 129 residues long: Ubiquinol-cytochrome-c reductase complex assembly factor 2 (129 aa).

The transit peptide at 1–13 directs the protein to the mitochondrion; that stretch reads MSATRYRRFLKLC.

Its subcellular location is the mitochondrion matrix. It is found in the mitochondrion nucleoid. The protein resides in the mitochondrion. Required for the assembly of the ubiquinol-cytochrome c reductase complex (mitochondrial respiratory chain complex III or cytochrome b-c1 complex). May play a role in the modulation of respiratory chain activities such as oxygen consumption and ATP production. May be involved in cytochrome b translation and/or stability. In Danio rerio (Zebrafish), this protein is Ubiquinol-cytochrome-c reductase complex assembly factor 2 (uqcc2).